The chain runs to 511 residues: LEM domain-containing protein 2 (511 aa).

Ala2 is modified (N-acetylalanine). The 41-residue stretch at 2–42 (AGLSDLELRRELQALGFQPGPITDTTRNVYRNKLRRLRGEA) folds into the LEM domain. Disordered regions lie at residues 18 to 110 (FQPG…SDAS) and 128 to 206 (GLSY…AGRT). Over residues 38–80 (LRGEARLRDDERLREDAGPREDAGPRGPERQREEARLREEAPL) the composition is skewed to basic and acidic residues. The interval 80–112 (LRARPAASVLRSEPWPLSPSPPAPSAASDASGP) is interaction with lamin A/C complexes. Residues 80–141 (LRARPAASVL…PPHAGPGPLR (62 aa)) form a required for nuclear retention and interaction with LMNA isoform C region. 2 stretches are compositionally biased toward low complexity: residues 81 to 94 (RARP…SEPW) and 172 to 183 (APPSASARPHSA). The next 2 membrane-spanning stretches (helical) occupy residues 221–241 (LLLW…WVKM) and 385–405 (VTHV…LILL). The segment at 403-511 (ILLKYRWRKL…KPSSFSDSER (109 aa)) is winged-Helix (WH). 3 positions are modified to phosphoserine: Ser505, Ser507, and Ser509.

In terms of assembly, interacts (via N-terminus) with LMNA isoform C (via C-terminus) (in vitro). Interacts (via LEM domain) with BANF1. Interacts (via C-terminus) with CHMP7. Interacts (via N-terminus) with tubulin; the interaction causes microtubule bundling and stabilization (in vitro). Post-translationally, phosphorylated; strongly phosphorylated in mitosis compared to G1/S. Ubiquitously expressed, including liver, brain, heart, skeletal muscle, lung, testis, spleen, kidney and white adipose tissue.

The protein localises to the nucleus inner membrane. The protein resides in the nucleus envelope. It is found in the cytoplasm. It localises to the cytoskeleton. Its subcellular location is the spindle. Functionally, nuclear lamina-associated inner nuclear membrane protein that is involved in nuclear structure organization and maintenance of nuclear envelope (NE) integrity and NE reformation after mitosis. Plays a role as transmembrane adapter for the endosomal sorting complexes required for transport (ESCRT), and is thereby involved in ESCRT-mediated NE reformation. Promotes ESCRT-mediated NE closure by recruiting CHMP7 and downstream ESCRT-III proteins IST1/CHMP8 and CHMP2A to the reforming NE during anaphase. During nuclear reassembly, condenses into a liquid-like coating around microtubule spindles and coassembles with CHMP7 to form a macromolecular O-ring seal at the confluence between membranes, chromatin, and the spindle to facilitate early nuclear sealing. Plays a role in the organization of heterochromatin associated with the NE and in the maintenance of NE organization under mechanical stress. Required for embryonic development and is involved in regulation of several signaling pathways such as MAPK and AKT. Required for myoblast differentiation involving regulation of ERK signaling. Essential for cardiac homeostasis and proper heart function. The sequence is that of LEM domain-containing protein 2 (Lemd2) from Mus musculus (Mouse).